The following is a 137-amino-acid chain: 15.7 kDa heat shock protein, peroxisomal (137 aa).

One can recognise a sHSP domain in the interval 15–134 (QEWSRSTALI…SSKVRNVNIT (120 aa)). The Microbody targeting signal signature appears at 135-137 (SKL).

It belongs to the small heat shock protein (HSP20) family. As to quaternary structure, may form oligomeric structures.

It is found in the peroxisome. In terms of biological role, possesses chaperone activity. This Arabidopsis thaliana (Mouse-ear cress) protein is 15.7 kDa heat shock protein, peroxisomal (HSP15.7).